The primary structure comprises 196 residues: Probable nicotinate-nucleotide adenylyltransferase (196 aa).

Belongs to the NadD family.

The catalysed reaction is nicotinate beta-D-ribonucleotide + ATP + H(+) = deamido-NAD(+) + diphosphate. The protein operates within cofactor biosynthesis; NAD(+) biosynthesis; deamido-NAD(+) from nicotinate D-ribonucleotide: step 1/1. Functionally, catalyzes the reversible adenylation of nicotinate mononucleotide (NaMN) to nicotinic acid adenine dinucleotide (NaAD). This is Probable nicotinate-nucleotide adenylyltransferase from Thermotoga petrophila (strain ATCC BAA-488 / DSM 13995 / JCM 10881 / RKU-1).